The primary structure comprises 688 residues: MDFITINSSNKTEEFALKQVAKQATSSLMYRLGKTIILASVCVEREPVSEDFLPLVVQFLEKSYAAGKIPGGFVKREGRAQDFEILTSRLIDRTFRPLFPKDYRYPTQITLMVLSHDIENDLQVSALNAASVALFLAHIAPIKSVSACRIARIDDEFIINPNTSLLNQSSLDLFVSGTKESLNMIEMRSLGQKLNALEEPLMLKALELAQKSLKETCTLYEEVFTPHQNELLFKESQGIIFNERLLDLLKNQYFDEIIKGIESSALSERENVFHEIAKKISEAHSEFSLEEIEWSLEKVKKTEIRRMIIQDKIRPDKRALEEVRPILIESDLLPMAHSSILFTRGQTQSLVVGVLGTDNDAQTHESLEHKTPIKERFMFHYNFPPFCVGEASSIGAASRRELGHGNLAKRALETSIKNKEQVIRLVSEILESNGSSSMASVCAGSLALYASGVEIHDLVAGVAMGMVSEGQDYAILSDISGLEDAEGDMDFKIAGNLEGITAMQMDTKMSGIQLEILYQALLQAKEARKHILKIMHEAKEKIVINFSHLPTTEIFNVAPDKIVEIIGQGGRVIKEIVEKFEVKIDLNKPSGEVKIMGNKERVLKTKEFILNYLHSLDQELEQYTIDEVLEAQVKRIVDFGAFLSLPKGGEGLLRKQNMDRCQVVLREGDSIRCRVISFNKGKIALDLA.

Positions 484 and 490 each coordinate Mg(2+). The KH domain occupies 550-609 (PTTEIFNVAPDKIVEIIGQGGRVIKEIVEKFEVKIDLNKPSGEVKIMGNKERVLKTKEFI). In terms of domain architecture, S1 motif spans 626-688 (DEVLEAQVKR…NKGKIALDLA (63 aa)).

It belongs to the polyribonucleotide nucleotidyltransferase family. Mg(2+) is required as a cofactor.

The protein resides in the cytoplasm. The catalysed reaction is RNA(n+1) + phosphate = RNA(n) + a ribonucleoside 5'-diphosphate. In terms of biological role, involved in mRNA degradation. Catalyzes the phosphorolysis of single-stranded polyribonucleotides processively in the 3'- to 5'-direction. This Helicobacter pylori (strain G27) protein is Polyribonucleotide nucleotidyltransferase.